A 620-amino-acid polypeptide reads, in one-letter code: Proline--tRNA ligase (620 aa).

It belongs to the class-II aminoacyl-tRNA synthetase family. ProS type 1 subfamily. As to quaternary structure, homodimer.

Its subcellular location is the cytoplasm. It catalyses the reaction tRNA(Pro) + L-proline + ATP = L-prolyl-tRNA(Pro) + AMP + diphosphate. Functionally, catalyzes the attachment of proline to tRNA(Pro) in a two-step reaction: proline is first activated by ATP to form Pro-AMP and then transferred to the acceptor end of tRNA(Pro). As ProRS can inadvertently accommodate and process non-cognate amino acids such as alanine and cysteine, to avoid such errors it has two additional distinct editing activities against alanine. One activity is designated as 'pretransfer' editing and involves the tRNA(Pro)-independent hydrolysis of activated Ala-AMP. The other activity is designated 'posttransfer' editing and involves deacylation of mischarged Ala-tRNA(Pro). The misacylated Cys-tRNA(Pro) is not edited by ProRS. This Streptococcus thermophilus (strain CNRZ 1066) protein is Proline--tRNA ligase.